The sequence spans 311 residues: Geranylgeranyl transferase type-2 subunit beta (311 aa).

PFTB repeat units follow at residues 54–95 (KERI…AMLD), 102–143 (KDKV…AILG), 150–191 (KNTA…KILN), 197–239 (DEEL…AIIG), and 246–288 (RNQL…SLLQ). Geranylgeranyl diphosphate contacts are provided by residues 176-178 (HGA) and 218-230 (RPEKLPDSCYGWW). Positions 224, 226, and 276 each coordinate Zn(2+).

Belongs to the protein prenyltransferase subunit beta family. In terms of assembly, heterodimer of an alpha and a beta subunit. The cofactor is Zn(2+).

It carries out the reaction geranylgeranyl diphosphate + L-cysteinyl-[protein] = S-geranylgeranyl-L-cysteinyl-[protein] + diphosphate. Catalyzes the transfer of a geranyl-geranyl moiety from geranyl-geranyl pyrophosphate to proteins having the C-terminal -XCC or -XCXC, where both cysteines may become modified. The protein is Geranylgeranyl transferase type-2 subunit beta (ptb1) of Schizosaccharomyces pombe (strain 972 / ATCC 24843) (Fission yeast).